A 138-amino-acid chain; its full sequence is Large ribosomal subunit protein bL19 (138 aa).

It belongs to the bacterial ribosomal protein bL19 family.

This protein is located at the 30S-50S ribosomal subunit interface and may play a role in the structure and function of the aminoacyl-tRNA binding site. In Rickettsia akari (strain Hartford), this protein is Large ribosomal subunit protein bL19.